We begin with the raw amino-acid sequence, 428 residues long: Elongation factor 1-alpha (428 aa).

Residues 5–225 form the tr-type G domain; sequence KPVLNVAFIG…DKFQPPEKPT (221 aa). The segment at 14-21 is G1; the sequence is GHVDAGKS. 14-21 lines the GTP pocket; it reads GHVDAGKS. Mg(2+) is bound at residue Ser21. Positions 70–74 are G2; that stretch reads GVTID. A G3 region spans residues 91–94; it reads DCPG. Residues 91-95 and 149-152 each bind GTP; these read DCPGH and NKMD. A G4 region spans residues 149–152; sequence NKMD. Residues 189 to 191 form a G5 region; the sequence is ASL.

It belongs to the TRAFAC class translation factor GTPase superfamily. Classic translation factor GTPase family. EF-Tu/EF-1A subfamily.

It is found in the cytoplasm. It catalyses the reaction GTP + H2O = GDP + phosphate + H(+). In terms of biological role, GTP hydrolase that promotes the GTP-dependent binding of aminoacyl-tRNA to the A-site of ribosomes during protein biosynthesis. This Methanocaldococcus jannaschii (strain ATCC 43067 / DSM 2661 / JAL-1 / JCM 10045 / NBRC 100440) (Methanococcus jannaschii) protein is Elongation factor 1-alpha.